Consider the following 269-residue polypeptide: Probable ribosomal RNA small subunit methyltransferase A (269 aa).

Histidine 19, leucine 21, glycine 46, glutamate 67, aspartate 92, and asparagine 107 together coordinate S-adenosyl-L-methionine.

Belongs to the class I-like SAM-binding methyltransferase superfamily. rRNA adenine N(6)-methyltransferase family. RsmA subfamily.

The protein localises to the cytoplasm. Functionally, specifically dimethylates two adjacent adenosines in the loop of a conserved hairpin near the 3'-end of 16S rRNA in the 30S particle. May play a critical role in biogenesis of 30S subunits. The sequence is that of Probable ribosomal RNA small subunit methyltransferase A from Methanosarcina acetivorans (strain ATCC 35395 / DSM 2834 / JCM 12185 / C2A).